A 708-amino-acid chain; its full sequence is Polyribonucleotide nucleotidyltransferase (708 aa).

Mg(2+) contacts are provided by D490 and D496. Residues 557 to 619 (PRIETMTIPK…KSIDDAIRLI (63 aa)) enclose the KH domain. The 71-residue stretch at 629-699 (GEVYKGKVRS…KTGKFKLSRK (71 aa)) folds into the S1 motif domain.

This sequence belongs to the polyribonucleotide nucleotidyltransferase family. Mg(2+) is required as a cofactor.

It is found in the cytoplasm. It catalyses the reaction RNA(n+1) + phosphate = RNA(n) + a ribonucleoside 5'-diphosphate. In terms of biological role, involved in mRNA degradation. Catalyzes the phosphorolysis of single-stranded polyribonucleotides processively in the 3'- to 5'-direction. The chain is Polyribonucleotide nucleotidyltransferase from Bacteroides fragilis (strain ATCC 25285 / DSM 2151 / CCUG 4856 / JCM 11019 / LMG 10263 / NCTC 9343 / Onslow / VPI 2553 / EN-2).